Consider the following 177-residue polypeptide: Large ribosomal subunit protein uL6 (177 aa).

It belongs to the universal ribosomal protein uL6 family. As to quaternary structure, part of the 50S ribosomal subunit.

In terms of biological role, this protein binds to the 23S rRNA, and is important in its secondary structure. It is located near the subunit interface in the base of the L7/L12 stalk, and near the tRNA binding site of the peptidyltransferase center. This Histophilus somni (strain 129Pt) (Haemophilus somnus) protein is Large ribosomal subunit protein uL6.